A 398-amino-acid polypeptide reads, in one-letter code: Probable sugar efflux transporter (398 aa).

A run of 12 helical transmembrane segments spans residues 15–35 (VVTL…PVGL), 50–70 (VGIM…PFML), 81–101 (LIGL…AWNF), 103–123 (VLVI…SITA), 136–156 (AQAL…GLPI), 169–189 (TFFA…KLLP), 209–229 (PALM…YTAY), 246–266 (FATV…VLFG), 275–295 (LLVS…MPAA), 301–321 (LAIL…GMQV), 333–353 (VAMS…ALVG), and 364–384 (AIGY…ILIF).

It belongs to the major facilitator superfamily. SotB (TC 2.A.1.2) family.

It is found in the cell inner membrane. In terms of biological role, involved in the efflux of sugars. The physiological role may be the reduction of the intracellular concentration of toxic sugars or sugar metabolites. This is Probable sugar efflux transporter from Enterobacter sp. (strain 638).